Here is a 617-residue protein sequence, read N- to C-terminus: Zinc finger protein 613 (617 aa).

Positions 8-78 (LTLEDVAVEF…ENEIHSQICP (71 aa)) constitute a KRAB domain. 12 consecutive C2H2-type zinc fingers follow at residues 204-226 (HVCTECGKAFLKKSRLIYHQRVH), 232-254 (HGCSICGKAFSRKSGLTEHQRNH), 260-282 (YECTECDKAFRWKSQLNAHQKIH), 288-310 (YICSDCGKGFIKKSRLINHQRVH), 316-338 (HGCSLCGKAFSKRSRLTEHQRTH), 344-366 (YECTECDKAFRWKSQLNAHQKAH), 372-394 (YICRDCGKGFIQKGNLIVHQRIH), 400-422 (YICNECGKGFIQKGNLLIHRRTH), 428-450 (YVCNECGKGFSQKTCLISHQRFH), 456-478 (FVCTECGKSCSHKSGLINHQRIH), 484-506 (YTCSDCGKAFRDKSCLNRHRRTH), and 512-535 (YGCSDCGKAFSHLSCLVYHKGMLH).

It belongs to the krueppel C2H2-type zinc-finger protein family.

Its subcellular location is the nucleus. May be involved in transcriptional regulation. The chain is Zinc finger protein 613 (ZNF613) from Homo sapiens (Human).